Here is a 399-residue protein sequence, read N- to C-terminus: Zinc finger HIT domain-containing protein 2 (399 aa).

N-acetylmethionine is present on Met1. 8 residues coordinate Zn(2+): Cys7, Cys10, Cys22, Cys25, Cys30, Cys34, His38, and Cys41. The HIT-type zinc-finger motif lies at 7 to 41 (CGFCPTGEAQPARYTCPRCNVPYCSLRCYRAHGSC). Disordered regions lie at residues 71–97 (LRQQ…GLSG) and 141–166 (EELG…PEPV).

In terms of assembly, interacts (via HIT-type zinc finger) with RUVBL2 in the presence of ATP or ADP; shows a stronger interaction in the presence of ADP.

Its function is as follows. May act as a bridging factor mediating the interaction between the R2TP/Prefoldin-like (R2TP/PFDL) complex and U5 small nuclear ribonucleoprotein (U5 snRNP). Required for the interaction of R2TP complex subunit RPAP3 and prefoldin-like subunit URI1 with U5 snRNP proteins EFTUD2 and PRPF8. May play a role in regulating the composition of the U5 snRNP complex. This chain is Zinc finger HIT domain-containing protein 2 (ZNHIT2), found in Bos taurus (Bovine).